A 379-amino-acid polypeptide reads, in one-letter code: Alkanesulfonate monooxygenase (379 aa).

Belongs to the SsuD family.

It catalyses the reaction an alkanesulfonate + FMNH2 + O2 = an aldehyde + FMN + sulfite + H2O + 2 H(+). In terms of biological role, catalyzes the desulfonation of aliphatic sulfonates. The chain is Alkanesulfonate monooxygenase from Sorangium cellulosum (strain So ce56) (Polyangium cellulosum (strain So ce56)).